Here is a 677-residue protein sequence, read N- to C-terminus: Beta-galactosidase (677 aa).

An N-terminal signal peptide occupies residues 1–23; sequence MPGFLVRILPLLLVLLLLGPTRG. The propeptide occupies 24–28; it reads LRNAT. N26 carries N-linked (GlcNAc...) asparagine glycosylation. Positions 83, 129, and 187 each coordinate substrate. E188 serves as the catalytic Proton donor. A disulfide bond links C195 and C230. The N-linked (GlcNAc...) asparagine glycan is linked to N247. E268 serves as the catalytic Nucleophile. Substrate is bound at residue Y333. N-linked (GlcNAc...) asparagine glycosylation is found at N464, N498, N542, N545, and N555. C626 and C634 form a disulfide bridge. Residues 650 to 677 are disordered; the sequence is YDHPSKPVEKRLMPPPPQKNKDSWLDHV. Basic and acidic residues-rich tracts occupy residues 652 to 661 and 668 to 677; these read HPSKPVEKRL and KNKDSWLDHV.

It belongs to the glycosyl hydrolase 35 family. As to quaternary structure, homodimer. May form higher multimers. As to expression, detected in placenta (at protein level). Detected in fibroblasts and testis.

It localises to the lysosome. Its subcellular location is the cytoplasm. The protein localises to the perinuclear region. The catalysed reaction is Hydrolysis of terminal non-reducing beta-D-galactose residues in beta-D-galactosides.. Cleaves beta-linked terminal galactosyl residues from gangliosides, glycoproteins, and glycosaminoglycans. Functionally, has no beta-galactosidase catalytic activity, but plays functional roles in the formation of extracellular elastic fibers (elastogenesis) and in the development of connective tissue. Seems to be identical to the elastin-binding protein (EBP), a major component of the non-integrin cell surface receptor expressed on fibroblasts, smooth muscle cells, chondroblasts, leukocytes, and certain cancer cell types. In elastin producing cells, associates with tropoelastin intracellularly and functions as a recycling molecular chaperone which facilitates the secretions of tropoelastin and its assembly into elastic fibers. This Homo sapiens (Human) protein is Beta-galactosidase (GLB1).